Consider the following 179-residue polypeptide: ATP-dependent protease subunit HslV (179 aa).

Residue threonine 7 is part of the active site. Positions 162, 165, and 168 each coordinate Na(+).

Belongs to the peptidase T1B family. HslV subfamily. In terms of assembly, a double ring-shaped homohexamer of HslV is capped on each side by a ring-shaped HslU homohexamer. The assembly of the HslU/HslV complex is dependent on binding of ATP.

Its subcellular location is the cytoplasm. The catalysed reaction is ATP-dependent cleavage of peptide bonds with broad specificity.. With respect to regulation, allosterically activated by HslU binding. Protease subunit of a proteasome-like degradation complex believed to be a general protein degrading machinery. The protein is ATP-dependent protease subunit HslV of Bordetella bronchiseptica (strain ATCC BAA-588 / NCTC 13252 / RB50) (Alcaligenes bronchisepticus).